A 128-amino-acid polypeptide reads, in one-letter code: Gastrotropin (128 aa).

Residue Ala2 is modified to N-acetylalanine.

This sequence belongs to the calycin superfamily. Fatty-acid binding protein (FABP) family.

The protein localises to the cytoplasm. Its subcellular location is the membrane. Binds to bile acids and is involved in enterohepatic bile acid metabolism. Required for efficient apical to basolateral transport of conjugated bile acids in ileal enterocytes. Stimulates gastric acid and pepsinogen secretion. The protein is Gastrotropin (FABP6) of Bos taurus (Bovine).